Here is a 29-residue protein sequence, read N- to C-terminus: Glucagon (29 aa).

This sequence belongs to the glucagon family.

Its subcellular location is the secreted. In terms of biological role, glucagon plays a key role in glucose metabolism and homeostasis. Regulates blood glucose by increasing gluconeogenesis and decreasing glycolysis. The protein is Glucagon (gcg) of Polypterus senegalus (Senegal bichir).